The chain runs to 536 residues: Protein ST7 homolog (536 aa).

A run of 2 helical transmembrane segments spans residues 3-23 and 49-69; these read CSWT…LFAL and FYVA…IFEW. A coiled-coil region spans residues 191–218; sequence LAEEESETVSQAENLLRRALRAIESTLN. Residues 465–485 traverse the membrane as a helical segment; sequence TLMMLLQTFICLAICILAVLA.

It belongs to the ST7 family.

Its subcellular location is the membrane. In Caenorhabditis elegans, this protein is Protein ST7 homolog.